The chain runs to 310 residues: Olfactory receptor 8B12 (310 aa).

At 1–24 (MAAKNSSVTEFILEGLTHQPGLRI) the chain is on the extracellular side. Residue N5 is glycosylated (N-linked (GlcNAc...) asparagine). The chain crosses the membrane as a helical span at residues 25–45 (PLFFLFLGFYTVTVVGNLGLI). The Cytoplasmic segment spans residues 46–53 (TLIGLNSH). Residues 54–74 (LHTPMYFFLFNLSLIDFCFST) traverse the membrane as a helical segment. The Extracellular portion of the chain corresponds to 75 to 98 (TITPKMLMSFVSRKNIISFTGCMT). C96 and C188 are joined by a disulfide. A helical transmembrane segment spans residues 99 to 119 (QLFFFCFFVVSESFILSAMAY). Residues 120-138 (DRYVAICNPLLYTVTMSCQ) are Cytoplasmic-facing. The chain crosses the membrane as a helical span at residues 139 to 159 (VCLLLLLGAYGMGFAGAMAHT). Topologically, residues 160 to 196 (GSIMNLTFCADNLVNHFMCDILPLLELSCNSSYMNEL) are extracellular. 2 N-linked (GlcNAc...) asparagine glycosylation sites follow: N164 and N189. A helical transmembrane segment spans residues 197–216 (VVFIVVAVDVGMPIVTVFIS). Topologically, residues 217 to 236 (YALILSSILHNSSTEGRSKA) are cytoplasmic. The chain crosses the membrane as a helical span at residues 237–257 (FSTCSSHIIVVSLFFGSGAFM). Topologically, residues 258–270 (YLKPLSILPLEQG) are extracellular. The chain crosses the membrane as a helical span at residues 271–291 (KVSSLFYTIIVPVLNPLIYSL). Residues 292–310 (RNKDVKVALRRTLGRKIFS) are Cytoplasmic-facing.

It belongs to the G-protein coupled receptor 1 family.

It localises to the cell membrane. Functionally, odorant receptor. The chain is Olfactory receptor 8B12 (OR8B12) from Homo sapiens (Human).